The primary structure comprises 148 residues: Cofilin/actin-depolymerizing factor homolog (148 aa).

The ADF-H domain occupies 4–143 (GVTVSDVCKT…SREAVEEKLR (140 aa)). The Nuclear localization signal signature appears at 19–23 (KKDKK).

The protein belongs to the actin-binding proteins ADF family. Phosphorylated in vitro by protein kinase LIMK1. Phosphorylation is required for inactivation of tsr and for cell proliferation and axon growth. Phosphorylation is negatively regulated by the panthothenate kinase fbl which catalyzes the first step in the conversion of panthothenic acid to coenzyme A. In terms of processing, dephosphorylated by protein phosphatase ssh which activates tsr.

The protein resides in the cytoplasm. It is found in the cytoskeleton. The protein localises to the nucleus matrix. Its function is as follows. Exhibits F-actin depolymerizing activity and regulates actin cytoskeleton dynamics. Required for cytokinesis in both mitotic and meiotic cells and for aster migration and separation. Promotes cell motility during ovary development and oogenesis. During larval development, required for the cell rearrangement needed for formation of terminal filaments which are stacks of somatic cells that are important for the initiation of ovarioles. Also required for border cell migration during oogenesis. During border cell migration, required for actin turnover and lamellipodial protrusion. Required for the establishment of planar cell polarity (PCP) where cells adopt a uniform orientation within the plane of an epithelium. During establishment of PCP, required for the redistribution of the PCP core proteins fz and stan/fmi to the proximodistal cell boundary. During pupal development, required for elongation of the retinal cell body and for rhabdomere morphogenesis. Required for mushroom body neuroblast proliferation and axon growth. Plays a role in the positive regulation of protein secretion. Plays a role in the regulation of nuclear localization of actin. Required for the maintenance of epithelial integrity by controlling cell junctions and is also necessary for cell survival and tissue growth through regulation of JNK and yki signaling. The sequence is that of Cofilin/actin-depolymerizing factor homolog from Drosophila melanogaster (Fruit fly).